The following is a 135-amino-acid chain: RuBisCO chaperone RbcX (135 aa).

The disordered stretch occupies residues 103–135 (QHLERMTQVSLSHPSPESEQQQFSDPDWDNLAS). Residues 109–126 (TQVSLSHPSPESEQQQFS) are compositionally biased toward polar residues.

It belongs to the RbcX family. In terms of assembly, homodimer. Interacts with the exposed C-terminal peptide of RbcL ('Glu-459-Asp-468'); binds 1 RbcL peptide per homodimer. Contacts a second RbcL monomer via its peripheral polar surface. A slightly longer RbcL peptide binds to RbcX2 with a higher affinity.

The protein resides in the carboxysome. It localises to the cytoplasm. In terms of biological role, an RbcL-specific chaperone. The central cleft of the RbcX homodimer (RbcX2) binds the C-terminus of an RbcL monomer, stabilizing the C-terminus and probably preventing its reassociation with chaperonin GroEL-ES. At the same time the peripheral region of RbcX2 binds a second RbcL monomer, bridging the RbcL homodimers in the correct orientation. The RbcX2(2)-bound RbcL dimers then assemble into the RbcL8 core (RbcL8-(RbcX2)8). RbcS binding triggers the release of RbcX2. Its function is as follows. Required for optimal reconstitution of RuBisCO upon expression of rbcL-rbcS subunits in E.coli. This Anabaena sp. (strain CA / ATCC 33047) protein is RuBisCO chaperone RbcX.